A 261-amino-acid chain; its full sequence is Follistatin-related protein 3 (261 aa).

Residues 1–26 (MRPRAPGPLWPLPWGALAWAVGFVGS) form the signal peptide. The region spanning 36-107 (GVCWLQQGRE…SCEGVECGPG (72 aa)) is the TB domain. 8 disulfides stabilise this stretch: Cys-38/Cys-61, Cys-48/Cys-92, Cys-62/Cys-95, Cys-99/Cys-110, Cys-104/Cys-119, Cys-121/Cys-153, Cys-125/Cys-146, and Cys-135/Cys-167. An N-linked (GlcNAc...) asparagine glycan is attached at Asn-73. Positions 99-119 (CEGVECGPGKACRMLGGRPRC) constitute a Follistatin-like 1 domain. Kazal-like domains lie at 113 to 169 (LGGR…RCRK) and 189 to 245 (SAHC…SCAG). The Follistatin-like 2 domain occupies 170–193 (SCAHVVCLRPQSCVVDQTGSAHCV). Intrachain disulfides connect Cys-195/Cys-229, Cys-200/Cys-222, and Cys-211/Cys-243. An N-linked (GlcNAc...) asparagine glycan is attached at Asn-215. A disordered region spans residues 242–261 (SCAGTPEPLDPESEEEENFV). Acidic residues predominate over residues 250–261 (LDPESEEEENFV).

As to quaternary structure, interacts with INHBA and INHBB. Interacts with FN1. Interacts with ADAM12. Interacts with MLLT10; the interaction enhances MLLT10 in vitro transcriptional activity and self-association. Interacts with MSTN.

The protein resides in the secreted. Its subcellular location is the nucleus. Its function is as follows. The secreted form is a binding and antagonizing protein for members of the TGF-beta family, such as activin, BMP2 and MSTN. Inhibits activin A-, activin B-, BMP2- and MSDT-induced cellular signaling; more effective on activin A than on activin B. Involved in bone formation; inhibits osteoclast differentiation. Involved in hematopoiesis; involved in differentiation of hemopoietic progenitor cells, increases hematopoietic cell adhesion to fibronectin and seems to contribute to the adhesion of hematopoietic precursor cells to the bone marrow stroma. The nuclear form is probably involved in transcriptional regulation via interaction with MLLT10. This is Follistatin-related protein 3 (FSTL3) from Bos taurus (Bovine).